Here is a 281-residue protein sequence, read N- to C-terminus: 4-deoxy-L-threo-5-hexosulose-uronate ketol-isomerase (281 aa).

The Zn(2+) site is built by His198, His200, Glu205, and His248.

It belongs to the KduI family. Zn(2+) is required as a cofactor.

The catalysed reaction is 5-dehydro-4-deoxy-D-glucuronate = 3-deoxy-D-glycero-2,5-hexodiulosonate. Its pathway is glycan metabolism; pectin degradation; 2-dehydro-3-deoxy-D-gluconate from pectin: step 4/5. In terms of biological role, catalyzes the isomerization of 5-dehydro-4-deoxy-D-glucuronate to 3-deoxy-D-glycero-2,5-hexodiulosonate. The polypeptide is 4-deoxy-L-threo-5-hexosulose-uronate ketol-isomerase (Lacticaseibacillus casei (strain BL23) (Lactobacillus casei)).